Here is a 563-residue protein sequence, read N- to C-terminus: Putative cysteine ligase BshC (563 aa).

Residues 474–506 adopt a coiled-coil conformation; the sequence is LEQSLMGTSKQAEKALDTLRQKTQRANRRKHDE.

It belongs to the BshC family.

This Prosthecochloris aestuarii (strain DSM 271 / SK 413) protein is Putative cysteine ligase BshC.